The following is a 205-amino-acid chain: Retron Vc95 putative HNH endonuclease (205 aa).

Putative HNH endonuclease component of antiviral defense system retron Vc95, composed of a non-coding RNA (ncRNA), a reverse transcriptase (RT), a probable ATP-binding protein and this protein. Expression of retron Vc95 confers protection against bacteriophages T2, T4 and T6. At multiplicity of infection (MOI) of 0.02 cultures slow growth when infected with T4 but do not collapse, at MOI 2 cultures enter growth stasis. The polypeptide is Retron Vc95 putative HNH endonuclease (Vibrio cholerae serotype O1 biovar El Tor).